The sequence spans 36 residues: MSDIN-like toxin proprotein 10 (36 aa).

Positions 1–10 (MSDINATRLP) are excised as a propeptide. The segment at residues 11-19 (GAYPPVPMP) is a cross-link (cyclopeptide (Gly-Pro)). The propeptide occupies 20–36 (CVGDADNFTLTRGENLC).

The protein belongs to the MSDIN fungal toxin family. In terms of processing, processed by the macrocyclase-peptidase enzyme POPB to yield a toxic cyclic nonapeptide. POPB first removes 10 residues from the N-terminus. Conformational trapping of the remaining peptide forces the enzyme to release this intermediate rather than proceed to macrocyclization. The enzyme rebinds the remaining peptide in a different conformation and catalyzes macrocyclization of the N-terminal 9 residues.

Its function is as follows. Probable toxin that belongs to the MSDIN-like toxin family responsible for a large number of food poisoning cases and deaths. This is MSDIN-like toxin proprotein 10 from Amanita bisporigera (Destroying angel).